A 332-amino-acid chain; its full sequence is 4-hydroxy-3-methylbut-2-enyl diphosphate reductase (332 aa).

Cysteine 13 contributes to the [4Fe-4S] cluster binding site. Residues histidine 41 and histidine 75 each contribute to the (2E)-4-hydroxy-3-methylbut-2-enyl diphosphate site. The dimethylallyl diphosphate site is built by histidine 41 and histidine 75. Isopentenyl diphosphate is bound by residues histidine 41 and histidine 75. Residue cysteine 97 coordinates [4Fe-4S] cluster. Position 125 (histidine 125) interacts with (2E)-4-hydroxy-3-methylbut-2-enyl diphosphate. Residue histidine 125 coordinates dimethylallyl diphosphate. Isopentenyl diphosphate is bound at residue histidine 125. Glutamate 127 serves as the catalytic Proton donor. Residue threonine 168 coordinates (2E)-4-hydroxy-3-methylbut-2-enyl diphosphate. A [4Fe-4S] cluster-binding site is contributed by cysteine 229. Serine 257, serine 258, asparagine 259, and serine 306 together coordinate (2E)-4-hydroxy-3-methylbut-2-enyl diphosphate. 4 residues coordinate dimethylallyl diphosphate: serine 257, serine 258, asparagine 259, and serine 306. Residues serine 257, serine 258, asparagine 259, and serine 306 each contribute to the isopentenyl diphosphate site.

Belongs to the IspH family. Requires [4Fe-4S] cluster as cofactor.

It catalyses the reaction isopentenyl diphosphate + 2 oxidized [2Fe-2S]-[ferredoxin] + H2O = (2E)-4-hydroxy-3-methylbut-2-enyl diphosphate + 2 reduced [2Fe-2S]-[ferredoxin] + 2 H(+). The enzyme catalyses dimethylallyl diphosphate + 2 oxidized [2Fe-2S]-[ferredoxin] + H2O = (2E)-4-hydroxy-3-methylbut-2-enyl diphosphate + 2 reduced [2Fe-2S]-[ferredoxin] + 2 H(+). Its pathway is isoprenoid biosynthesis; dimethylallyl diphosphate biosynthesis; dimethylallyl diphosphate from (2E)-4-hydroxy-3-methylbutenyl diphosphate: step 1/1. It participates in isoprenoid biosynthesis; isopentenyl diphosphate biosynthesis via DXP pathway; isopentenyl diphosphate from 1-deoxy-D-xylulose 5-phosphate: step 6/6. Catalyzes the conversion of 1-hydroxy-2-methyl-2-(E)-butenyl 4-diphosphate (HMBPP) into a mixture of isopentenyl diphosphate (IPP) and dimethylallyl diphosphate (DMAPP). Acts in the terminal step of the DOXP/MEP pathway for isoprenoid precursor biosynthesis. The sequence is that of 4-hydroxy-3-methylbut-2-enyl diphosphate reductase from Chlorobaculum parvum (strain DSM 263 / NCIMB 8327) (Chlorobium vibrioforme subsp. thiosulfatophilum).